The chain runs to 446 residues: D(1A) dopamine receptor (446 aa).

Topologically, residues 1 to 22 (MAPNTSTMDETGLPVERDFSFR) are extracellular. A glycan (N-linked (GlcNAc...) asparagine) is linked at Asn-4. The helical transmembrane segment at 23–48 (ILTACFLSLLILSTLLGNTLVCAAVI) threads the bilayer. Residues 49-59 (RFRHLRSKVTN) lie on the Cytoplasmic side of the membrane. The chain crosses the membrane as a helical span at residues 60–86 (FFVISLAVSDLLVAVLVMPWKAVAEIA). Over 87-95 (GFWPFGSFC) the chain is Extracellular. A disulfide bridge links Cys-95 with Cys-186. A helical transmembrane segment spans residues 96 to 118 (NIWVAFDIMCSTASILNLCVISV). The Cytoplasmic portion of the chain corresponds to 119-137 (DRYWAISSPFQYERKMTPK). A helical transmembrane segment spans residues 138–162 (AAFILISVAWTLSVLISFIPVQLSW). At 163-192 (HKAKPTWPLDGNFTSLEDAEDDNCDTRLSR) the chain is on the extracellular side. Residues 193 to 218 (TYAISSSLISFYIPVAIMIVTYTSIY) form a helical membrane-spanning segment. The Cytoplasmic portion of the chain corresponds to 219-272 (RIAQKQIRRISALERAAVHAKNCQTTTGNGNPVECSQSESSFKMSFKRETKVLK). Residues 273 to 299 (TLSVIMGVFVCCWLPFFISNCMVPFCG) traverse the membrane as a helical segment. Topologically, residues 300 to 312 (SEETQPFCIDSIT) are extracellular. A helical membrane pass occupies residues 313-337 (FDVFVWFGWANSSLNPIIYAFNADF). At 338-446 (QKAFSTLLGC…PVTHSGQHST (109 aa)) the chain is on the cytoplasmic side. 2 S-palmitoyl cysteine lipidation sites follow: Cys-347 and Cys-351. Ser-441 is modified (phosphoserine).

The protein belongs to the G-protein coupled receptor 1 family. In terms of assembly, interacts with DNAJC14 via its C-terminus. Interacts with DRD2. Interacts with DORIP1.

The protein localises to the cell membrane. The protein resides in the endoplasmic reticulum membrane. It localises to the cell projection. It is found in the cilium membrane. Its subcellular location is the dendrite. The protein localises to the dendritic spine. Functionally, dopamine receptor whose activity is mediated by G proteins which activate adenylyl cyclase. This chain is D(1A) dopamine receptor (Drd1), found in Mus musculus (Mouse).